We begin with the raw amino-acid sequence, 327 residues long: 2-methoxy-6-polyprenyl-1,4-benzoquinol methylase, mitochondrial (327 aa).

Residues 1-43 constitute a mitochondrion transit peptide; the sequence is MAAPIRAFVLRVLSDSTRNIHHVLRCRSKYLCRRAAITARRGY. S-adenosyl-L-methionine-binding positions include Thr117, Asp171, and 199–200; that span reads DA.

The protein belongs to the class I-like SAM-binding methyltransferase superfamily. MenG/UbiE family. Component of a multi-subunit COQ enzyme complex, composed of at least coq3, coq4, coq5, coq6, coq7 and coq9.

It localises to the mitochondrion inner membrane. It carries out the reaction a 2-methoxy-6-(all-trans-polyprenyl)benzene-1,4-diol + S-adenosyl-L-methionine = a 5-methoxy-2-methyl-3-(all-trans-polyprenyl)benzene-1,4-diol + S-adenosyl-L-homocysteine + H(+). It functions in the pathway cofactor biosynthesis; ubiquinone biosynthesis. Methyltransferase required for the conversion of 2-polyprenyl-6-methoxy-1,4-benzoquinol (DDMQH2) to 2-polyprenyl-3-methyl-6-methoxy-1,4-benzoquinol (DMQH2). The protein is 2-methoxy-6-polyprenyl-1,4-benzoquinol methylase, mitochondrial of Danio rerio (Zebrafish).